Consider the following 462-residue polypeptide: Ubiquitin carboxyl-terminal hydrolase calypso (462 aa).

The UCH catalytic domain occupies 29-260 (GWLELESDPG…IRFNLMAVVP (232 aa)). The active-site Nucleophile is the cysteine 115. Histidine 197 serves as the catalytic Proton donor. The region spanning 357-385 (NYDKFICTFLTMLAHQGVLGELVSQHLLP) is the ULD domain. Positions 387-462 (KKISGQSAAN…KGRNKCRKRK (76 aa)) are positively charged C-terminal tail required for binding nucleosomes. The disordered stretch occupies residues 394–462 (AANRLNKQNS…KGRNKCRKRK (69 aa)). Low complexity predominate over residues 399 to 447 (NKQNSAAASTANSSAGATAGGAKSQQQQQQQQQPQQPQTPKNGKSPGKT). Positions 448 to 462 (PGRRRKGRNKCRKRK) are enriched in basic residues.

It belongs to the peptidase C12 family. BAP1 subfamily. As to quaternary structure, catalytic component of the polycomb repressive deubiquitinase (PR-DUB) complex, at least composed of caly/calypso, Asx and sba (MBD5/6 homolog). The PR-DUB complex associates with nucleosomes to mediate deubiquitination of histone H2AK118ub1 substrates; the association requires the positively charged C-terminal tail of caly, probably due to direct binding of DNA. Interacts (via ULD domain) with Asx (via DEUBAD domain); the interaction produces a stable heterodimer with a composite binding site for ubiquitin. Homodimerizes (via coiled-coil hinge-region between the UCH and ULD domains) to mediate assembly of 2 copies of the caly-Asx heterodimer into a bisymmetric tetramer; dimerization enhances PR-DUB association with nucleosomes.

Its subcellular location is the nucleus. It carries out the reaction Thiol-dependent hydrolysis of ester, thioester, amide, peptide and isopeptide bonds formed by the C-terminal Gly of ubiquitin (a 76-residue protein attached to proteins as an intracellular targeting signal).. Its function is as follows. Catalytic component of the polycomb repressive deubiquitinase (PR-DUB) complex, a complex that specifically mediates deubiquitination of histone H2A monoubiquitinated at 'Lys-119' (H2AK118ub1). Mediates bisymmetric organization of the PR-DUB complex and is involved in association with nucleosomes to mediate deubiquitination. Does not deubiquitinate monoubiquitinated histone H2B. Required to maintain the transcriptionally repressive state of homeotic genes throughout development. The PR-DUB complex has weak or no activity toward 'Lys-48'- and 'Lys-63'-linked polyubiquitin chains. Polycomb group (PcG) protein. The protein is Ubiquitin carboxyl-terminal hydrolase calypso of Drosophila virilis (Fruit fly).